The primary structure comprises 349 residues: Aquaporin-4 (349 aa).

Transmembrane regions (helical) follow at residues leucine 92–alanine 112 and alanine 125–leucine 147. Positions asparagine 148–alanine 150 match the NPA 1 motif. The chain crosses the membrane as a helical span at residues leucine 167 to isoleucine 187. Asparagine 194 and asparagine 207 each carry an N-linked (GlcNAc...) asparagine glycan. Helical transmembrane passes span glycine 225 to cysteine 245 and methionine 256 to alanine 276. The short motif at asparagine 281 to alanine 283 is the NPA 2 element. The helical transmembrane segment at tryptophan 314–isoleucine 334 threads the bilayer.

The protein belongs to the MIP/aquaporin (TC 1.A.8) family.

It localises to the cell membrane. Functionally, aquaglyceroporin that may modulate the water content and osmolytes during anhydrobiosis. In Milnesium tardigradum (Water bear), this protein is Aquaporin-4.